The following is a 676-amino-acid chain: Potassium voltage-gated channel subfamily KQT member 1 (676 aa).

Disordered regions lie at residues 1–28 and 62–84; these read MAAASSPPRAERKRWGWGRLPGARRGSA and APPASPAAPAAPPVASDLGPRPP. Topologically, residues 1 to 120 are cytoplasmic; that stretch reads MAAASSPPRA…YNFLERPTGW (120 aa). Phosphoserine; by PKA is present on S27. Residues 62–73 are compositionally biased toward pro residues; that stretch reads APPASPAAPAAP. The chain crosses the membrane as a helical span at residues 121–142; that stretch reads KCFVYHFAVFLIVLVCLIFSVL. The Extracellular segment spans residues 143-153; that stretch reads STIEQYAALAT. The helical transmembrane segment at 154-176 threads the bilayer; it reads GTLFWMEIVLVVFFGTEYVVRLW. Residues 177 to 192 lie on the Cytoplasmic side of the membrane; the sequence is SAGCRSKYVGLWGRLR. A helical membrane pass occupies residues 193–218; it reads FARKPISIIDLIVVVASMVVLCVGSK. The Extracellular portion of the chain corresponds to 219 to 226; sequence GQVFATSA. A helical; Voltage-sensor membrane pass occupies residues 227–242; sequence IRGIRFLQILRMLHVD. The segment at 238–246 is interaction with KCNE3; sequence MLHVDRQGG. Over 243–260 the chain is Cytoplasmic; the sequence is RQGGTWRLLGSVVFIHRQ. Q244 contacts a 1,2-diacyl-sn-glycero-3-phospho-(1D-myo-inositol-4,5-bisphosphate). The chain crosses the membrane as a helical span at residues 261–283; it reads ELITTLYIGFLGLIFSSYFVYLA. The Extracellular segment spans residues 284–299; sequence EKDAVNESGRVEFGSY. N289 carries N-linked (GlcNAc...) asparagine glycosylation. An intramembrane region (pore-forming) is located at residues 300–320; it reads ADALWWGVVTVTTIGYGDKVP. Residues 321–322 lie on the Extracellular side of the membrane; sequence QT. A helical membrane pass occupies residues 323–348; the sequence is WVGKTIASCFSVFAISFFALPAGILG. Over 349 to 676 the chain is Cytoplasmic; it reads SGFALKVQQK…VPRRGPDEGS (328 aa). The segment at 370–382 is interaction with CALM; sequence AAASLIQTAWRCY. Residues S407 and S409 each carry the phosphoserine modification. An interaction with CALM; calcium-dependent region spans residues 515–529; the sequence is KVIRRMQYFVAKKKF. Residues 535–572 form an interaction with KCNE1 C-terminus region; it reads PYDVRDVIEQYSQGHLNLMVRIKELQRRLDQSIGKPSL. The stretch at 585-621 forms a coiled coil; the sequence is SNTIGARLNRVEDKVTQLDQRLALITDMLHQLLSLHG. The segment at 588-616 is interaction with AKAP9; that stretch reads IGARLNRVEDKVTQLDQRLALITDMLHQL. The interval 589–620 is C-terminal assembly domain (tetramerization); it reads GARLNRVEDKVTQLDQRLALITDMLHQLLSLH. The tract at residues 620-676 is disordered; that stretch reads HGGSTPGSGGPPREGGAHITQPCGSGGSVDPELFLPSNTLPTYEQLTVPRRGPDEGS. Positions 623 to 632 are enriched in gly residues; the sequence is STPGSGGPPR. Positions 655–664 are enriched in polar residues; it reads PSNTLPTYEQ.

This sequence belongs to the potassium channel family. KQT (TC 1.A.1.15) subfamily. Kv7.1/KCNQ1 sub-subfamily. In terms of assembly, tetramer. Heterotetramer with KCNE1; targets to the membrane raft. Interacts (via C-terminus) with calmodulin; forms a heterooctameric structure (with 4:4 KCNQ1:CALM stoichiometry); the interaction is calcium-independent, constitutive, participates in the proper assembly of a functional channel and also acts a calcium sensor. KCNQ1 channels interact more strongly with Ca(2+)-CALM than with apoCALM. Interacts with AKAP9; targets protein kinase A (PKA) catalytic and regulatory subunits and protein phosphatase 1 (PP1) to the KCNQ1-KCNE1 complex, allowing PKA-mediated phosphorylation and increase of delayed rectifier potassium channel activity. Interacts with KCNE2; forms a heterooligomer complex that targets to the membrane raft and leading to currents with an apparently instantaneous activation, a rapid deactivation process and a linear current-voltage relationship and decreases the amplitude of the outward current. Interacts with AP2M1; mediates estrogen-induced internalization via clathrin-coated vesicles. Interacts with NEDD4L; promotes internalization and decreases I(Ks) currents. Interacts with USP2; counteracts the NEDD4L-specific down-regulation of I(Ks) and restore plasma membrane localization. Heterotetramer with KCNQ5; has a voltage-gated potassium channel activity. Interacts with KCNE3; four KCNE3 molecules are bound to one KCNQ1 tetramer (4:4 KCNQ1:KCNE3 stoichiometry); alters membrane raft localization; affects KCNQ1 structure and gating properties. Interacts with KCNE4; impairs KCNQ1 localization in lipid rafts and inhibits voltage-gated potassium channel activity. Interacts with KCNE5; impairs KCNQ1 localization in lipid rafts and only conducts current upon strong and continued depolarization. Interacts with SLC5A3; forms coregulatory channel-transporter complexes that modulate Na(+)-coupled myo-inositol influx through the transporter. In terms of processing, phosphorylation at Ser-27 by PKA; increases delayed rectifier potassium channel activity of the KCNQ1-KCNE1 complex through a macromolecular complex that includes PKA, PP1, and the targeting protein AKAP9. Ubiquitinated by NEDD4L; promotes internalization. The ubiquitinylated form is internalized through a clathrin-mediated endocytosis by interacting with AP2M1 and is recycled back to the cell membrane via RAB4A and RAB11A. Post-translationally, deubiquitinated by USP2; counteracts the NEDD4L-specific down-regulation of I(Ks) and restores the membrane localization. Abundantly expressed in heart, pancreas, prostate, kidney, small intestine and peripheral blood leukocytes. Less abundant in placenta, lung, spleen, colon, thymus, testis and ovaries.

Its subcellular location is the cell membrane. The protein resides in the cytoplasmic vesicle membrane. It is found in the early endosome. The protein localises to the membrane raft. It localises to the endoplasmic reticulum. Its subcellular location is the basolateral cell membrane. The protein resides in the apical cell membrane. The catalysed reaction is K(+)(in) = K(+)(out). With respect to regulation, PIP2 molecule is essential to activate KCNQ channels by inducing the coupling of the voltage-sensing domain (VSD) and the pore-forming domain (PD). Upon channel activation, PIP2 disrupts the VSD-calmodulin/CALM interactions, causing the release of CALM from the VSD which triggers the opening of the gate. Calcium potentiates KCNQ1 channel current through calcium-bound CALM. Calcium-bound CALM competes with PIP2 to stabilize the channel open state. In terms of biological role, pore-forming subunit of the voltage-gated potassium (Kv) channel involved in the regulation of cardiomyocyte excitability and important in normal development and functions of myocardium, inner ear, stomach and colon. Associates with KCNE beta subunits that modulates current kinetics. Induces a voltage-dependent current by rapidly activating and slowly deactivating potassium-selective outward current. Also promotes a delayed voltage activated potassium current showing outward rectification characteristic. During beta-adrenergic receptor stimulation, participates in cardiac repolarization by associating with KCNE1 to form the I(Ks) cardiac potassium current that increases the amplitude and slows down the activation kinetics of outward potassium current I(Ks). Muscarinic agonist oxotremorine-M strongly suppresses KCNQ1/KCNE1 current. When associated with KCNE3, forms the potassium channel that is important for cyclic AMP-stimulated intestinal secretion of chloride ions. This interaction with KCNE3 is reduced by 17beta-estradiol, resulting in the reduction of currents. During conditions of increased substrate load, maintains the driving force for proximal tubular and intestinal sodium ions absorption, gastric acid secretion, and cAMP-induced jejunal chloride ions secretion. Allows the provision of potassium ions to the luminal membrane of the secretory canaliculus in the resting state as well as during stimulated acid secretion. When associated with KCNE2, forms a heterooligomer complex leading to currents with an apparently instantaneous activation, a rapid deactivation process and a linear current-voltage relationship and decreases the amplitude of the outward current. When associated with KCNE4, inhibits voltage-gated potassium channel activity. When associated with KCNE5, this complex only conducts current upon strong and continued depolarization. Also forms a heterotetramer with KCNQ5; has a voltage-gated potassium channel activity. Binds with phosphatidylinositol 4,5-bisphosphate. KCNQ1-KCNE2 channel associates with Na(+)-coupled myo-inositol symporter in the apical membrane of choroid plexus epithelium and regulates the myo-inositol gradient between blood and cerebrospinal fluid with an impact on neuron excitability. Its function is as follows. Non-functional alone but modulatory when coexpressed with the full-length isoform 1. This Homo sapiens (Human) protein is Potassium voltage-gated channel subfamily KQT member 1.